We begin with the raw amino-acid sequence, 206 residues long: Glycerol-3-phosphate acyltransferase 1 (206 aa).

The next 5 membrane-spanning stretches (helical) occupy residues 7–27 (LVIG…KIFL), 54–74 (ILTC…VYFI), 81–101 (DLSF…WNHF), 114–134 (IVFF…FLVI), and 155–175 (WINF…IMIF).

Belongs to the PlsY family. Probably interacts with PlsX.

The protein localises to the cell membrane. The catalysed reaction is an acyl phosphate + sn-glycerol 3-phosphate = a 1-acyl-sn-glycero-3-phosphate + phosphate. The protein operates within lipid metabolism; phospholipid metabolism. Its function is as follows. Catalyzes the transfer of an acyl group from acyl-phosphate (acyl-PO(4)) to glycerol-3-phosphate (G3P) to form lysophosphatidic acid (LPA). This enzyme utilizes acyl-phosphate as fatty acyl donor, but not acyl-CoA or acyl-ACP. The protein is Glycerol-3-phosphate acyltransferase 1 of Lactobacillus johnsonii (strain CNCM I-12250 / La1 / NCC 533).